Consider the following 137-residue polypeptide: Ribonuclease P protein component (137 aa).

Belongs to the RnpA family. Consists of a catalytic RNA component (M1 or rnpB) and a protein subunit.

The catalysed reaction is Endonucleolytic cleavage of RNA, removing 5'-extranucleotides from tRNA precursor.. Its function is as follows. RNaseP catalyzes the removal of the 5'-leader sequence from pre-tRNA to produce the mature 5'-terminus. It can also cleave other RNA substrates such as 4.5S RNA. The protein component plays an auxiliary but essential role in vivo by binding to the 5'-leader sequence and broadening the substrate specificity of the ribozyme. This Porphyromonas gingivalis (strain ATCC BAA-308 / W83) protein is Ribonuclease P protein component.